The sequence spans 315 residues: MPVSYDFVILLALFIVLARSHPLPEETAGDASNKCTLSEEDLSNLKSAIYSAASAKSSETAILSNDTLTACPMLSNFTEMLKTVATDMEVLKTQGVSNAEVELLRESFEEKLNELAKNKDIFERQAGQEASKTEGAMVEKINQLQLQMTKLQEEIEQQTKQMYADMIEYVFQRLKTNDTDAIDSYAQILFKAKMHDLFMKLKTDRWVLWNMLNYVEQKKDKLVGKRVLNTVINQVISLNRSNPDELEIGKHSLVNLLCWTSTAKTVYGAVQEDQKMFYLTKLYFPAEKGCTECKDVTSRTLCSNTYPKSIAKAYG.

The signal sequence occupies residues 1 to 20 (MPVSYDFVILLALFIVLARS). A coiled-coil region spans residues 98 to 161 (NAEVELLRES…QEEIEQQTKQ (64 aa)).

In terms of biological role, (Microbial infection) Modulates replication of duck Tembusu virus in salivary glands and virus release into the saliva, probably via the regulation of antimicrobial peptides expression in response to duck Tembusu virus infection. This Aedes albopictus (Asian tiger mosquito) protein is Salivary protein SG34.